A 141-amino-acid chain; its full sequence is Hemoglobin subunit alpha (141 aa).

The Globin domain maps to 1-141; it reads VLSPADKTNV…VSTVLTSKYR (141 aa). Position 3 is a phosphoserine (serine 3). At lysine 7 the chain carries N6-succinyllysine. Position 8 is a phosphothreonine (threonine 8). At lysine 11 the chain carries N6-succinyllysine. Lysine 16 carries the N6-acetyllysine; alternate modification. N6-succinyllysine; alternate is present on lysine 16. Tyrosine 24 is subject to Phosphotyrosine. Serine 35 is subject to Phosphoserine. The residue at position 40 (lysine 40) is an N6-succinyllysine. At serine 49 the chain carries Phosphoserine. Histidine 58 contributes to the O2 binding site. A heme b-binding site is contributed by histidine 87. At serine 102 the chain carries Phosphoserine. Threonine 108 bears the Phosphothreonine mark. Serine 124 and serine 131 each carry phosphoserine. Threonine 134 and threonine 137 each carry phosphothreonine. Serine 138 is modified (phosphoserine).

Belongs to the globin family. In terms of assembly, heterotetramer of two alpha chains and two beta chains. In terms of tissue distribution, red blood cells.

In terms of biological role, involved in oxygen transport from the lung to the various peripheral tissues. Functionally, hemopressin acts as an antagonist peptide of the cannabinoid receptor CNR1. Hemopressin-binding efficiently blocks cannabinoid receptor CNR1 and subsequent signaling. The polypeptide is Hemoglobin subunit alpha (HBA) (Semnopithecus entellus (Northern plains gray langur)).